Here is a 127-residue protein sequence, read N- to C-terminus: Large ribosomal subunit protein eL8 (127 aa).

Belongs to the eukaryotic ribosomal protein eL8 family. In terms of assembly, part of the 50S ribosomal subunit. Component of box C/D small ribonucleoprotein (sRNP) particles that contain rpl7ae, FlpA and nop5, plus a guide RNA. These sRNP particles form homodimers, giving rise to an asymmetric holoenzyme. Probably part of the RNase P complex.

It is found in the cytoplasm. Multifunctional RNA-binding protein that recognizes the K-turn motif in ribosomal RNA, the RNA component of RNase P, box H/ACA, box C/D and box C'/D' sRNAs. The polypeptide is Large ribosomal subunit protein eL8 (Saccharolobus solfataricus (strain ATCC 35092 / DSM 1617 / JCM 11322 / P2) (Sulfolobus solfataricus)).